The following is an 88-amino-acid chain: UPF0223 protein BH2638 (88 aa).

The protein belongs to the UPF0223 family.

The polypeptide is UPF0223 protein BH2638 (Halalkalibacterium halodurans (strain ATCC BAA-125 / DSM 18197 / FERM 7344 / JCM 9153 / C-125) (Bacillus halodurans)).